The sequence spans 200 residues: Phosphatidylethanolamine N-methyltransferase B (200 aa).

At 1-8 (MEKGLSSD) the chain is on the lumenal side. Residues 9-29 (LIIAFVAIVLHVVNYNVTAQF) constitute an intramembrane region (helical). The Lumenal portion of the chain corresponds to 30–39 (EYKTRYFTKL). A helical transmembrane segment spans residues 40-58 (IGRNAIYYYAVFLIISALI). Topologically, residues 59–86 (RDHFINVAVLSDKDSIILFPTEIANMIG) are cytoplasmic. A helical transmembrane segment spans residues 87–107 (DSCFIFGILLNIWTLKALGIK). 91-93 (IFG) provides a ligand contact to S-adenosyl-L-methionine. Residues 108-150 (GMYNGDSFGHIMDSPVTGGPYQFFSDPQYVGTTIAALGVAIRN) lie on the Lumenal side of the membrane. The helical transmembrane segment at 151-171 (QSIYGFLCTILVGVVFYISAT) threads the bilayer. At 172 to 200 (FVETPHLKNIYSNRSYSKINFKNLKSLKN) the chain is on the cytoplasmic side. 174–175 (ET) contributes to the S-adenosyl-L-methionine binding site.

Belongs to the class VI-like SAM-binding methyltransferase superfamily. PEMT/PEM2 methyltransferase family.

Its subcellular location is the endoplasmic reticulum membrane. The protein localises to the mitochondrion membrane. It catalyses the reaction a 1,2-diacyl-sn-glycero-3-phospho-N-methylethanolamine + S-adenosyl-L-methionine = a 1,2-diacyl-sn-glycero-3-phospho-N,N-dimethylethanolamine + S-adenosyl-L-homocysteine + H(+). It carries out the reaction a 1,2-diacyl-sn-glycero-3-phospho-N,N-dimethylethanolamine + S-adenosyl-L-methionine = a 1,2-diacyl-sn-glycero-3-phosphocholine + S-adenosyl-L-homocysteine + H(+). The catalysed reaction is a 1,2-diacyl-sn-glycero-3-phosphoethanolamine + S-adenosyl-L-methionine = a 1,2-diacyl-sn-glycero-3-phospho-N-methylethanolamine + S-adenosyl-L-homocysteine + H(+). It participates in phospholipid metabolism; phosphatidylcholine biosynthesis. Its function is as follows. Catalyzes the three sequential steps of the methylation pathway of phosphatidylcholine biosynthesis, the SAM-dependent methylation of phosphatidylethanolamine (PE) to phosphatidylmonomethylethanolamine (PMME), PMME to phosphatidyldimethylethanolamine (PDME), and PDME to phosphatidylcholine (PC). The sequence is that of Phosphatidylethanolamine N-methyltransferase B (pemtB) from Dictyostelium discoideum (Social amoeba).